Here is a 601-residue protein sequence, read N- to C-terminus: Elongation factor 4 (601 aa).

Residues 5–188 (SHIRNFAIIA…ALVLRLPPPT (184 aa)) enclose the tr-type G domain. GTP contacts are provided by residues 17–22 (DHGKST) and 135–138 (NKID).

This sequence belongs to the TRAFAC class translation factor GTPase superfamily. Classic translation factor GTPase family. LepA subfamily.

The protein localises to the cell inner membrane. The enzyme catalyses GTP + H2O = GDP + phosphate + H(+). Its function is as follows. Required for accurate and efficient protein synthesis under certain stress conditions. May act as a fidelity factor of the translation reaction, by catalyzing a one-codon backward translocation of tRNAs on improperly translocated ribosomes. Back-translocation proceeds from a post-translocation (POST) complex to a pre-translocation (PRE) complex, thus giving elongation factor G a second chance to translocate the tRNAs correctly. Binds to ribosomes in a GTP-dependent manner. In Rhodospirillum rubrum (strain ATCC 11170 / ATH 1.1.1 / DSM 467 / LMG 4362 / NCIMB 8255 / S1), this protein is Elongation factor 4.